The primary structure comprises 330 residues: Beta-1,6-galactofuranosyltransferase WbbI (330 aa).

The protein resides in the cytoplasm. The protein operates within bacterial outer membrane biogenesis; lipopolysaccharide biosynthesis. Functionally, involved in the transfer of galactofuranose (Galf) onto an alpha-D-gluco-configured acceptor substrate to form a beta-1,6-linkage. It uses n-octyl alpha-D-glucopyranoside as an acceptor substrate for the addition of galactofuranose from the donor substrate UDP-galactofuranose. It is not able to use beta-D-glucopyranoside isomers. This chain is Beta-1,6-galactofuranosyltransferase WbbI (wbbI), found in Escherichia coli (strain K12).